A 155-amino-acid polypeptide reads, in one-letter code: Small ribosomal subunit protein uS7c (155 aa).

Belongs to the universal ribosomal protein uS7 family. In terms of assembly, part of the 30S ribosomal subunit.

Its subcellular location is the plastid. The protein localises to the chloroplast. Its function is as follows. One of the primary rRNA binding proteins, it binds directly to 16S rRNA where it nucleates assembly of the head domain of the 30S subunit. In Spathiphyllum wallisii (Peace lily), this protein is Small ribosomal subunit protein uS7c (rps7).